A 171-amino-acid chain; its full sequence is 2-C-methyl-D-erythritol 2,4-cyclodiphosphate synthase (171 aa).

A divalent metal cation-binding residues include D8 and H10. 4-CDP-2-C-methyl-D-erythritol 2-phosphate is bound by residues 8 to 10 (DVH) and 34 to 35 (HS). H42 provides a ligand contact to a divalent metal cation. Residues 56 to 58 (DIG), 61 to 65 (FPDTD), 132 to 135 (TTTE), F139, and R142 each bind 4-CDP-2-C-methyl-D-erythritol 2-phosphate.

Belongs to the IspF family. As to quaternary structure, homotrimer. It depends on a divalent metal cation as a cofactor.

It carries out the reaction 4-CDP-2-C-methyl-D-erythritol 2-phosphate = 2-C-methyl-D-erythritol 2,4-cyclic diphosphate + CMP. The protein operates within isoprenoid biosynthesis; isopentenyl diphosphate biosynthesis via DXP pathway; isopentenyl diphosphate from 1-deoxy-D-xylulose 5-phosphate: step 4/6. Its function is as follows. Involved in the biosynthesis of isopentenyl diphosphate (IPP) and dimethylallyl diphosphate (DMAPP), two major building blocks of isoprenoid compounds. Catalyzes the conversion of 4-diphosphocytidyl-2-C-methyl-D-erythritol 2-phosphate (CDP-ME2P) to 2-C-methyl-D-erythritol 2,4-cyclodiphosphate (ME-CPP) with a corresponding release of cytidine 5-monophosphate (CMP). The chain is 2-C-methyl-D-erythritol 2,4-cyclodiphosphate synthase from Geotalea daltonii (strain DSM 22248 / JCM 15807 / FRC-32) (Geobacter daltonii).